The sequence spans 179 residues: Large ribosomal subunit protein uL5c (179 aa).

This sequence belongs to the universal ribosomal protein uL5 family. As to quaternary structure, part of the 50S ribosomal subunit; contacts the 5S rRNA.

It is found in the plastid. The protein resides in the chloroplast. Binds 5S rRNA, forms part of the central protuberance of the 50S subunit. This is Large ribosomal subunit protein uL5c (rpl5) from Euglena gracilis.